A 168-amino-acid chain; its full sequence is Diphosphoinositol polyphosphate phosphohydrolase 1 (168 aa).

Methionine 1 is modified (N-acetylmethionine). Residues arginine 10, 18–20 (KKR), and 39–41 (SSR) contribute to the substrate site. Residues 17–142 (YKKRAACLCF…KPVQASYFEA (126 aa)) enclose the Nudix hydrolase domain. Mg(2+) contacts are provided by glycine 50 and glutamate 66. Positions 51–72 (GGMEPEEEPSVAAVREVCEEAG) match the Nudix box motif. The Proton acceptor role is filled by glutamate 69. Glutamate 70 serves as a coordination point for Mg(2+). Residues 89 to 91 (RKH), arginine 115, and lysine 133 contribute to the substrate site.

This sequence belongs to the Nudix hydrolase family. DIPP subfamily. In terms of assembly, monomer. Mg(2+) serves as cofactor. It depends on Mn(2+) as a cofactor. Zn(2+) is required as a cofactor.

The protein resides in the cytoplasm. It is found in the nucleus. It catalyses the reaction diphospho-myo-inositol polyphosphate + H2O = myo-inositol polyphosphate + phosphate.. The catalysed reaction is 5-diphospho-1D-myo-inositol 1,2,3,4,6-pentakisphosphate + H2O = 1D-myo-inositol hexakisphosphate + phosphate + H(+). The enzyme catalyses 3,5-bis(diphospho)-1D-myo-inositol 1,2,4,6-tetrakisphosphate + H2O = 3-diphospho-1D-myo-inositol 1,2,4,5,6-pentakisphosphate + phosphate + 2 H(+). It carries out the reaction [phosphate](n+1) + n H2O = (n+1) phosphate + n H(+). It catalyses the reaction P(1),P(5)-bis(5'-adenosyl) pentaphosphate + H2O = ADP + ATP + 2 H(+). The catalysed reaction is P(1),P(6)-bis(5'-adenosyl) hexaphosphate + H2O = 2 ATP + 2 H(+). The enzyme catalyses P(1),P(4)-bis(5'-adenosyl) tetraphosphate + H2O = AMP + ATP + 2 H(+). It carries out the reaction a 5'-end (N(7)-methyl 5'-triphosphoguanosine)-ribonucleoside in mRNA + H2O = N(7)-methyl-GMP + a 5'-end diphospho-ribonucleoside in mRNA + 2 H(+). It catalyses the reaction a 5'-end (N(7)-methyl 5'-triphosphoguanosine)-ribonucleoside in mRNA + H2O = N(7)-methyl-GDP + a 5'-end phospho-ribonucleoside in mRNA + 2 H(+). Its activity is regulated as follows. Diphosphoinositol polyphosphate phosphohydrolase is inhibited by fluoride and InsP6. Cleaves a beta-phosphate from the diphosphate groups in PP-InsP5 (diphosphoinositol pentakisphosphate) and [PP]2-InsP4 (bisdiphosphoinositol tetrakisphosphate), suggesting that it may play a role in signal transduction. InsP6 (inositol hexakisphosphate) is not a substrate. Acts as a negative regulator of the ERK1/2 pathway. Also able to catalyze the hydrolysis of dinucleoside oligophosphates, with diadenosine 5',5'''-P1,P6-hexaphosphate (Ap6A) and diadenosine 5',5'''- P1,P5-pentaphosphate (Ap5A) being the preferred substrates. The major reaction products are ADP and p4a from Ap6A and ADP and ATP from Ap5A. Also able to hydrolyze 5- phosphoribose 1-diphosphate. Acts as a decapping enzyme that can hydrolyze both monomethylated and unmethylated capped RNAs. Hydrolyzes monomethylated capped RNA after both the alpha- and beta-phosphates generating m7GMP + ppRNA and m7GDP + pRNA. Modulates the stability of a subset of mRNAs implicated in cell motility. Divalent cations zinc, magnesium and manganese determine its substrate specificity. Exhibits endopolyphosphatase activity in the presence of zinc ions. Exhibits diphosphoinositol polyphosphate phosphohydrolase in the presence of magnesium ions and diadenosine hexaphosphate hydrolase activity in the presence of manganese ions. Plays an important role in limiting DNA damage and maintaining cell survival upon oxidative stress via its endopolyphosphatase activity. This is Diphosphoinositol polyphosphate phosphohydrolase 1 from Rattus norvegicus (Rat).